A 497-amino-acid polypeptide reads, in one-letter code: Probable malate:quinone oxidoreductase (497 aa).

Belongs to the MQO family. It depends on FAD as a cofactor.

It catalyses the reaction (S)-malate + a quinone = a quinol + oxaloacetate. It participates in carbohydrate metabolism; tricarboxylic acid cycle; oxaloacetate from (S)-malate (quinone route): step 1/1. In Wolinella succinogenes (strain ATCC 29543 / DSM 1740 / CCUG 13145 / JCM 31913 / LMG 7466 / NCTC 11488 / FDC 602W) (Vibrio succinogenes), this protein is Probable malate:quinone oxidoreductase.